A 1462-amino-acid polypeptide reads, in one-letter code: Serine/threonine-protein kinase HSL1 (1462 aa).

Disordered regions lie at residues 1-26 (MSTV…SSSM) and 41-69 (RLSQ…KLGR). In terms of domain architecture, Protein kinase spans 65–330 (WKLGRTLGRG…IDAILTHPLL (266 aa)). Residues 71-79 (LGRGSTGRV) and Lys-94 each bind ATP. The Proton acceptor role is filled by Asp-201. Disordered stretches follow at residues 412-450 (SNSF…HTTV), 471-540 (SAKG…TSVN), 598-637 (ENSK…TWSL), 992-1031 (EDEE…NYDF), 1095-1230 (KETL…QQTK), and 1269-1321 (NRAA…LQKE). 2 stretches are compositionally biased toward polar residues: residues 428–440 (PRST…TVTD) and 471–487 (SAKG…PNTP). Positions 510 to 526 (ASRSRNASSRSLKSNSS) are enriched in low complexity. A compositionally biased stretch (polar residues) spans 527–540 (TGRNGNNASVTSVN). The span at 610-620 (QLPPPPPPPIE) shows a compositional bias: pro residues. Positions 636 to 715 (SLARRERELA…KLQKHQSAHD (80 aa)) form a coiled coil. Positions 1095–1130 (KETLLKNHSSDEATIEVKEDNNEHDFNDKIKQHYDD) are enriched in basic and acidic residues. Over residues 1131-1153 (NGDSEEDDEDEDEEEEDDDDDDD) the composition is skewed to acidic residues. 3 stretches are compositionally biased toward polar residues: residues 1165–1176 (HNYSLAEITSES), 1197–1218 (STGI…NNGD), and 1292–1302 (NISQPLSSPTK).

This sequence belongs to the protein kinase superfamily. CAMK Ser/Thr protein kinase family. NIM1 subfamily. In terms of processing, phosphorylated throughout the cell cycle, except for the G1 phase.

The protein localises to the bud neck. It carries out the reaction L-seryl-[protein] + ATP = O-phospho-L-seryl-[protein] + ADP + H(+). The catalysed reaction is L-threonyl-[protein] + ATP = O-phospho-L-threonyl-[protein] + ADP + H(+). Its function is as follows. Protein kinase involved in determination of morphology during the cell cycle of both yeast-form and hyphal cells via regulation of SWE1 and CDC28. Regulates pseudohypha formation, but is not required for septin ring organization or septum formation. Plays an essential role in virulence in a mouse model. In Candida albicans (strain SC5314 / ATCC MYA-2876) (Yeast), this protein is Serine/threonine-protein kinase HSL1 (HSL1).